Here is a 387-residue protein sequence, read N- to C-terminus: Alpha-maltose-1-phosphate synthase (387 aa).

The protein belongs to the glycosyltransferase group 1 family.

It carries out the reaction ADP-alpha-D-glucose + alpha-D-glucose 1-phosphate = alpha-maltose 1-phosphate + ADP + H(+). It participates in capsule biogenesis; capsule polysaccharide biosynthesis. It functions in the pathway glycan biosynthesis; glycogen biosynthesis. Its function is as follows. Involved in the biosynthesis of the maltose-1-phosphate (M1P) building block required for alpha-glucan production by the key enzyme GlgE. Catalyzes the formation of an alpha-1,4 linkage between glucose from ADP-glucose and glucose 1-phosphate (G1P) to yield maltose-1-phosphate (M1P). The sequence is that of Alpha-maltose-1-phosphate synthase from Mycobacterium tuberculosis (strain CDC 1551 / Oshkosh).